The following is a 445-amino-acid chain: Cholesterol side-chain cleavage enzyme, mitochondrial (445 aa).

The transit peptide at 1 to 36 directs the protein to the mitochondrion; that stretch reads RGLPSRSVFLRGCQASLSTAQERLGHPGVPTREGVR.

Belongs to the cytochrome P450 family. As to quaternary structure, interacts with FDX1/adrenodoxin. It depends on heme as a cofactor.

It is found in the mitochondrion inner membrane. It catalyses the reaction 6 reduced [adrenodoxin] + cholesterol + 3 O2 + 6 H(+) = 4-methylpentanal + pregnenolone + 6 oxidized [adrenodoxin] + 4 H2O. The catalysed reaction is 2 reduced [adrenodoxin] + cholesterol + O2 + 2 H(+) = (22R)-hydroxycholesterol + 2 oxidized [adrenodoxin] + H2O. The enzyme catalyses (22R)-hydroxycholesterol + 2 reduced [adrenodoxin] + O2 + 2 H(+) = (20R,22R)-20,22-dihydroxycholesterol + 2 oxidized [adrenodoxin] + H2O. It carries out the reaction (20R,22R)-20,22-dihydroxycholesterol + 2 reduced [adrenodoxin] + O2 + 2 H(+) = 4-methylpentanal + pregnenolone + 2 oxidized [adrenodoxin] + 2 H2O. Its pathway is lipid metabolism; C21-steroid hormone metabolism. The protein operates within steroid metabolism; cholesterol metabolism. A cytochrome P450 monooxygenase that catalyzes the side-chain hydroxylation and cleavage of cholesterol to pregnenolone, the precursor of most steroid hormones. Catalyzes three sequential oxidation reactions of cholesterol, namely the hydroxylation at C22 followed with the hydroxylation at C20 to yield 20R,22R-hydroxycholesterol that is further cleaved between C20 and C22 to yield the C21-steroid pregnenolone and 4-methylpentanal. Mechanistically, uses molecular oxygen inserting one oxygen atom into a substrate and reducing the second into a water molecule. Two electrons are provided by NADPH via a two-protein mitochondrial transfer system comprising flavoprotein FDXR (adrenodoxin/ferredoxin reductase) and nonheme iron-sulfur protein FDX1 or FDX2 (adrenodoxin/ferredoxin). In Oryctolagus cuniculus (Rabbit), this protein is Cholesterol side-chain cleavage enzyme, mitochondrial (CYP11A1).